Here is a 268-residue protein sequence, read N- to C-terminus: F-actin-capping protein subunit alpha (268 aa).

Residue S2 is modified to N-acetylserine. At S17 the chain carries Phosphoserine.

It belongs to the F-actin-capping protein alpha subunit family. Component of the F-actin capping complex, composed of a heterodimer of an alpha and a beta subunit. Interacts with BSP1 (via C-terminus); leading to recruitment of the F-actin capping complex to actin cortical patches and the acomyosin contractile ring.

It localises to the cytoplasm. The protein localises to the cytoskeleton. Its subcellular location is the actin patch. In terms of biological role, F-actin-capping proteins bind in a Ca(2+)-independent manner to the fast growing ends of actin filaments (barbed end) thereby blocking the exchange of subunits at these ends. Unlike other capping proteins (such as gelsolin and severin), these proteins do not sever actin filaments. The polypeptide is F-actin-capping protein subunit alpha (CAP1) (Saccharomyces cerevisiae (strain ATCC 204508 / S288c) (Baker's yeast)).